The following is a 30-amino-acid chain: NIVDVPCRDDYYRDSSGNGVYDQLGGCGAA.

The cysteines at positions 7 and 27 are disulfide-linked.

The protein localises to the secreted. It localises to the nematocyst. Its function is as follows. Possible voltage-gated potassium channel (Kv) blocker. The sequence is that of U-actitoxin-Bcg2a from Bunodosoma cangicum (Sea anemone).